The following is a 485-amino-acid chain: UDP-N-acetylmuramate--L-alanine ligase (485 aa).

Position 125–131 (125–131 (GTHGKTT)) interacts with ATP.

This sequence belongs to the MurCDEF family.

The protein localises to the cytoplasm. It catalyses the reaction UDP-N-acetyl-alpha-D-muramate + L-alanine + ATP = UDP-N-acetyl-alpha-D-muramoyl-L-alanine + ADP + phosphate + H(+). It participates in cell wall biogenesis; peptidoglycan biosynthesis. Its function is as follows. Cell wall formation. The polypeptide is UDP-N-acetylmuramate--L-alanine ligase (Stutzerimonas stutzeri (strain A1501) (Pseudomonas stutzeri)).